Here is a 386-residue protein sequence, read N- to C-terminus: DNA-directed RNA polymerase subunit Rpo1C (386 aa).

The protein belongs to the RNA polymerase beta' chain family. Part of the RNA polymerase complex.

It localises to the cytoplasm. It carries out the reaction RNA(n) + a ribonucleoside 5'-triphosphate = RNA(n+1) + diphosphate. In terms of biological role, DNA-dependent RNA polymerase (RNAP) catalyzes the transcription of DNA into RNA using the four ribonucleoside triphosphates as substrates. Forms part of the jaw domain. This chain is DNA-directed RNA polymerase subunit Rpo1C, found in Methanococcus maripaludis (strain C7 / ATCC BAA-1331).